A 257-amino-acid chain; its full sequence is Transmembrane protein 101 (257 aa).

8 helical membrane passes run 21-40 (VLLT…LYAE), 52-72 (VPYL…MSFG), 77-97 (WFAL…YIGG), 110-130 (YSRT…AGEL), 139-159 (SLQS…AYSL), 182-202 (LFFV…YVTL), 206-226 (ILAV…AYWH), and 233-253 (FWNQ…AVIL).

It is found in the membrane. May activate NF-kappa-B signaling pathways. In Homo sapiens (Human), this protein is Transmembrane protein 101 (TMEM101).